A 930-amino-acid polypeptide reads, in one-letter code: uncharacterized protein (930 aa).

The N-terminal stretch at 1 to 20 (MPSFVLWTFHLCSQWFQGLT) is a signal peptide. Residues Asn137, Asn146, Asn164, Asn210, Asn257, Asn628, Asn717, and Asn799 are each glycosylated (N-linked (GlcNAc...) asparagine).

It localises to the secreted. This is an uncharacterized protein from Arthroderma benhamiae (strain ATCC MYA-4681 / CBS 112371) (Trichophyton mentagrophytes).